Reading from the N-terminus, the 533-residue chain is CTP synthase (533 aa).

The interval 1–269 (MKKNLKILVI…HEILSSKLNI (269 aa)) is amidoligase domain. Ser16 contributes to the CTP binding site. Ser16 is a UTP binding site. ATP-binding positions include 17–22 (GIGKGV) and Asp73. 2 residues coordinate Mg(2+): Asp73 and Glu143. CTP-binding positions include 150-152 (DME), 190-195 (KSKPTQ), and Lys226. UTP contacts are provided by residues 190–195 (KSKPTQ) and Lys226. The region spanning 304–533 (YAELDDSYAS…LFLGLIKACI (230 aa)) is the Glutamine amidotransferase type-1 domain. Gly355 is a binding site for L-glutamine. The active-site Nucleophile; for glutamine hydrolysis is the Cys382. Residues 383-386 (LGLQ), Glu406, and Arg466 contribute to the L-glutamine site. Catalysis depends on residues His511 and Glu513.

This sequence belongs to the CTP synthase family. As to quaternary structure, homotetramer.

It catalyses the reaction UTP + L-glutamine + ATP + H2O = CTP + L-glutamate + ADP + phosphate + 2 H(+). It carries out the reaction L-glutamine + H2O = L-glutamate + NH4(+). The catalysed reaction is UTP + NH4(+) + ATP = CTP + ADP + phosphate + 2 H(+). Its pathway is pyrimidine metabolism; CTP biosynthesis via de novo pathway; CTP from UDP: step 2/2. With respect to regulation, allosterically activated by GTP, when glutamine is the substrate; GTP has no effect on the reaction when ammonia is the substrate. The allosteric effector GTP functions by stabilizing the protein conformation that binds the tetrahedral intermediate(s) formed during glutamine hydrolysis. Inhibited by the product CTP, via allosteric rather than competitive inhibition. Its function is as follows. Catalyzes the ATP-dependent amination of UTP to CTP with either L-glutamine or ammonia as the source of nitrogen. Regulates intracellular CTP levels through interactions with the four ribonucleotide triphosphates. This chain is CTP synthase, found in Borreliella burgdorferi (strain ATCC 35210 / DSM 4680 / CIP 102532 / B31) (Borrelia burgdorferi).